Reading from the N-terminus, the 958-residue chain is SLIT and NTRK-like protein 5 (958 aa).

A signal peptide spans 1–40 (MHTCCPPVTLEQDLHRKMHSWMLQTLAFAVTSLVLSCAET). Residues 41–664 (IDYYGEICDN…GGGASSVPLS (624 aa)) are Extracellular-facing. LRR repeat units lie at residues 82 to 103 (PIYH…EFVN), 106 to 127 (GASI…AFHG), 130 to 151 (GLRR…TFLG), 154 to 175 (NLEY…AFGK), 178 to 199 (LLQV…LFRF), and 201 to 222 (PLTH…GLLQ). N-linked (GlcNAc...) asparagine glycosylation is present at asparagine 103. The LRRCT 1 domain maps to 235–286 (NPWNCSCELISLKDWLDSISYSALVGDVVCETPFRLHGRDLDEVSKQELCPR). The disordered stretch occupies residues 317–358 (ATSSSAVYKPPLKPPKGTRQPNKPRVRPTSRQPSKDLGYSNY). The LRRNT domain occupies 365–407 (QTKSPVPLECPTACSCNLQISDLGLNVNCQERKIESIAELQPK). LRR repeat units follow at residues 410–431 (NPKK…DFLE), 434–455 (GLDL…AFGD), 458–479 (NLRR…LFYG), 482–503 (SLQY…TFDP), 506–527 (NLQL…VFSG), and 529–550 (TLLR…GVLD). An LRRCT 2 domain is found at 563-614 (NPWDCTCDIVGMKLWVEQLKVGVLVDEVICKAPKKFAETDMRSIKSELLCPD). Asparagine 644 carries N-linked (GlcNAc...) asparagine glycosylation. The chain crosses the membrane as a helical span at residues 665 to 685 (VLILSLLLVFIMSVFVAAGLF). Over 686-958 (VLVMKRRKKN…LEKQTTFSQF (273 aa)) the chain is Cytoplasmic. The interval 789–844 (NHHLQQQQQPPPPPQQPQQQPPPQLQLQPGEEERRESHHLRSPAYSVSTIEPREDL) is disordered. The segment covering 797–812 (QPPPPPQQPQQQPPPQ) has biased composition (pro residues).

Belongs to the SLITRK family. As to expression, expressed predominantly in the cerebral cortex of the brain but also at low levels in the spinal cord and medulla.

Its subcellular location is the membrane. Its function is as follows. Suppresses neurite outgrowth. The sequence is that of SLIT and NTRK-like protein 5 (SLITRK5) from Homo sapiens (Human).